Reading from the N-terminus, the 230-residue chain is V-type proton ATPase subunit E1 (230 aa).

Met-1 carries the post-translational modification N-acetylmethionine. The stretch at 8-67 forms a coiled coil; it reads RQIQQMVRFIRQEAEEKANEISVSAEEEFNIEKLQLVEAEKKKIRQDYEKKEKQADVRKK. Ser-178 bears the Phosphoserine mark.

The protein belongs to the V-ATPase E subunit family. As to quaternary structure, V-ATPase is a heteromultimeric enzyme composed of a peripheral catalytic V1 complex (components A to H) attached to an integral membrane V0 proton pore complex (components: a, c, c'', d and e).

The protein resides in the vacuole membrane. Subunit of the peripheral V1 complex of vacuolar ATPase essential for assembly or catalytic function. V-ATPase is responsible for acidifying a variety of intracellular compartments in eukaryotic cells. Required for Golgi organization and vacuole function in embryogenesis. This Arabidopsis thaliana (Mouse-ear cress) protein is V-type proton ATPase subunit E1 (VHA-E1).